Here is a 513-residue protein sequence, read N- to C-terminus: Probable lipid II flippase MurJ (513 aa).

15 helical membrane-spanning segments follow: residues 3 to 23 (ILKS…LGFM), 25 to 45 (DLLI…FLAF), 83 to 103 (FISN…AFGI), 133 to 153 (IMFP…ILNA), 162 to 182 (YSSI…TAYF), 186 to 206 (ILSL…YQFP), 221 to 241 (ILNL…LGMS), 245 to 265 (VSII…ISWI), 271 to 291 (LVEF…LPLL), 313 to 333 (LVCI…ESLI), 354 to 374 (IEFY…LAGF), 382 to 402 (TPMK…IFFI), 405 to 425 (FQYT…FFLL), 441 to 461 (WLRF…LLFI), and 481 to 501 (LFYI…CLGL).

The protein belongs to the MurJ/MviN family.

The protein localises to the cell inner membrane. It participates in cell wall biogenesis; peptidoglycan biosynthesis. Functionally, involved in peptidoglycan biosynthesis. Transports lipid-linked peptidoglycan precursors from the inner to the outer leaflet of the cytoplasmic membrane. This chain is Probable lipid II flippase MurJ, found in Buchnera aphidicola subsp. Baizongia pistaciae (strain Bp).